The primary structure comprises 248 residues: NAD-dependent protein deacylase 2 (248 aa).

The 248-residue stretch at 1–248 (MLQAASALRH…HVMAELISHI (248 aa)) folds into the Deacetylase sirtuin-type domain. Residues 19-38 (GAGL…GGLY) and 102-105 (QNVD) contribute to the NAD(+) site. H122 functions as the Proton acceptor in the catalytic mechanism. Residues C130, C133, C152, and C155 each contribute to the Zn(2+) site. Residues 193–195 (GTT), 219–221 (NPQ), and A237 each bind NAD(+).

Belongs to the sirtuin family. Class III subfamily. The cofactor is Zn(2+).

The protein localises to the cytoplasm. The enzyme catalyses N(6)-acetyl-L-lysyl-[protein] + NAD(+) + H2O = 2''-O-acetyl-ADP-D-ribose + nicotinamide + L-lysyl-[protein]. Functionally, NAD-dependent protein deacetylase which modulates the activities of several proteins which are inactive in their acetylated form. This chain is NAD-dependent protein deacylase 2 (cobB2), found in Pseudomonas syringae pv. tomato (strain ATCC BAA-871 / DC3000).